A 408-amino-acid polypeptide reads, in one-letter code: LIN1-like protein (408 aa).

The segment at 1–161 (MKRTLRNPGN…SVPSSPKRMS (161 aa)) is disordered. The span at 41 to 52 (YYESESEEDEDQ) shows a compositional bias: acidic residues. Basic and acidic residues-rich tracts occupy residues 53-62 (ILNKEKKEGQ), 73-109 (DEKR…KEVL), and 119-129 (NGKYSKLRYED). The region spanning 344 to 402 (SSQYNFKWEFDDKTYGPYTASQIQAWSNEGYFTDAKHAAFIQLANMDEWMYPNNICFCD) is the GYF domain.

Belongs to the LIN1 family.

The polypeptide is LIN1-like protein (Schizosaccharomyces pombe (strain 972 / ATCC 24843) (Fission yeast)).